A 175-amino-acid chain; its full sequence is Interferon a3 (175 aa).

Residues 1-23 (MYTMQSWSCIFLIICSMQSVCHC) form the signal peptide. Cysteines 24 and 120 form a disulfide.

This sequence belongs to the alpha/beta interferon family. Isoform 1 and isoform 2 are expressed in several tissues, including gill, spleen, intestine, kidney and skin.

The protein localises to the secreted. Its subcellular location is the cytoplasm. It is found in the cytosol. In terms of biological role, key player in antiviral response. Induces expression of TLRs, including that of TLR3, TLR9 and TLR8a1, and that of cytosolic pattern recognition receptors, including RIGI, IFIH1/MDA5 and DHX58/LGP2. Also induces MX1 and its own expression. In the presence of intracellular IFNAR2 (iIFNAR2) and IFNAR1B, intracellular isoform 3 may mediate STAT1 and STAT2 phosphorylation and induction of EIF2AK2, MX1 and RSAD2. This is Interferon a3 from Oncorhynchus mykiss (Rainbow trout).